Reading from the N-terminus, the 196-residue chain is ATP-dependent Clp protease proteolytic subunit (196 aa).

S101 serves as the catalytic Nucleophile. H126 is a catalytic residue.

This sequence belongs to the peptidase S14 family. In terms of assembly, component of the chloroplastic Clp protease core complex.

The protein resides in the plastid. It localises to the chloroplast stroma. It catalyses the reaction Hydrolysis of proteins to small peptides in the presence of ATP and magnesium. alpha-casein is the usual test substrate. In the absence of ATP, only oligopeptides shorter than five residues are hydrolyzed (such as succinyl-Leu-Tyr-|-NHMec, and Leu-Tyr-Leu-|-Tyr-Trp, in which cleavage of the -Tyr-|-Leu- and -Tyr-|-Trp bonds also occurs).. In terms of biological role, cleaves peptides in various proteins in a process that requires ATP hydrolysis. Has a chymotrypsin-like activity. Plays a major role in the degradation of misfolded proteins. The sequence is that of ATP-dependent Clp protease proteolytic subunit from Lepidium virginicum (Virginia pepperweed).